A 184-amino-acid polypeptide reads, in one-letter code: dTTP/UTP pyrophosphatase (184 aa).

Catalysis depends on Asp67, which acts as the Proton acceptor.

Belongs to the Maf family. YhdE subfamily. Requires a divalent metal cation as cofactor.

The protein localises to the cytoplasm. The catalysed reaction is dTTP + H2O = dTMP + diphosphate + H(+). It carries out the reaction UTP + H2O = UMP + diphosphate + H(+). Nucleoside triphosphate pyrophosphatase that hydrolyzes dTTP and UTP. May have a dual role in cell division arrest and in preventing the incorporation of modified nucleotides into cellular nucleic acids. In Elusimicrobium minutum (strain Pei191), this protein is dTTP/UTP pyrophosphatase.